The sequence spans 258 residues: Granzyme M (258 aa).

The 230-residue stretch at 21 to 250 (IIGGREAVPH…YSSWIRKVIG (230 aa)) folds into the Peptidase S1 domain. A disulfide bridge connects residues C46 and C62. Catalysis depends on charge relay system residues H61 and D107. Positions 122–141 (NVKPLALPRKPRDKPAEGSR) are disordered. 3 cysteine pairs are disulfide-bonded: C142–C210, C173–C189, and C200–C226. N-linked (GlcNAc...) asparagine glycosylation occurs at N174. The active-site Charge relay system is the S204. N225 carries an N-linked (GlcNAc...) asparagine glycan.

It belongs to the peptidase S1 family. Granzyme subfamily.

It localises to the secreted. The protein localises to the cytoplasmic granule. Its function is as follows. Cleaves peptide substrates after methionine, leucine, and norleucine. Physiological substrates include EZR, alpha-tubulins and the apoptosis inhibitor BIRC5/Survivin. Promotes caspase activation and subsequent apoptosis of target cells. In Rattus norvegicus (Rat), this protein is Granzyme M (Gzmm).